A 180-amino-acid polypeptide reads, in one-letter code: Photosystem II extrinsic protein V (180 aa).

The first 40 residues, 1 to 40 (MFSKAFSFQKVFAPARRRLLVLLLAALMAGFGWGLAPVFA), serve as a signal peptide directing secretion. The heme c site is built by Cys-73, Cys-76, His-77, and His-128.

The protein belongs to the cytochrome c family. PsbV subfamily. As to quaternary structure, PSII is composed of 1 copy each of membrane proteins PsbA, PsbB, PsbC, PsbD, PsbE, PsbF, PsbH, PsbI, PsbJ, PsbK, PsbL, PsbM, PsbT, PsbX, PsbY, PsbZ, Psb30/Ycf12, peripheral proteins PsbO, CyanoQ (PsbQ), PsbU, PsbV and a large number of cofactors. It forms dimeric complexes. Heme c is required as a cofactor.

The protein localises to the cellular thylakoid membrane. In terms of biological role, one of the extrinsic, lumenal subunits of photosystem II (PSII). PSII is a light-driven water plastoquinone oxidoreductase, using light energy to abstract electrons from H(2)O, generating a proton gradient subsequently used for ATP formation. The extrinsic proteins stabilize the structure of photosystem II oxygen-evolving complex (OEC), the ion environment of oxygen evolution and protect the OEC against heat-induced inactivation. Low-potential cytochrome c that plays a role in the OEC of PSII. This chain is Photosystem II extrinsic protein V, found in Synechococcus sp. (strain JA-2-3B'a(2-13)) (Cyanobacteria bacterium Yellowstone B-Prime).